A 548-amino-acid polypeptide reads, in one-letter code: MMSEQDLADVVQIAVEDLSPDHPVVLENHVVTDDDEPALKRQRLEINCQDPSIKSFLYSINQTICLRLDSIEAKLQALEATCKSLEEKLDLVTNKQHSPIQVPMVAGSPLGATQTCNKVRCVVPQTTVILNNDRQNAIVAKMEDPLSNRAPDSLENIISNAVPGRRQNTIVVKVPGQDDSHNEDGESGSEASDSVSNCGQPGSQNIGSNVTLITLNSEEDYPNGTWLGDENNPEMRVRCAIIPSDMLHISTNCRTAEKMALTLLDYLFHREVQAVSNLSGQGKHGKKQLDPLTIYGIRCHLFYKFGITESDWYRIKQSIDSKCRTAWRRKQRGQSLAVKSFSRRTPSSSSYSASETMMGTPPPTSELQQSQPQALHYALANAQQVQIHQIGEDGQVQVIPQGHLHIAQVPQGEQVQITQDSEGNLQIHHVGQDGQSWGLCQNPIPVSGDSVAQANPSQLWPLGGDTLDLPAGNEMIQVLQGAQLIAVASSDPAATGVDGSPLQGSDIQVQYVQLAPVSDHTAAAQTAEALQPTLQPDMQLEHGAIQIQ.

Residues S19, S98, and S108 each carry the phosphoserine modification. The stretch at 65–98 forms a coiled coil; sequence CLRLDSIEAKLQALEATCKSLEEKLDLVTNKQHS. A Glycyl lysine isopeptide (Lys-Gly) (interchain with G-Cter in SUMO2) cross-link involves residue K141. Residues 160–350 form an interaction with CUX1 and HDAC1 region; sequence NAVPGRRQNT…FSRRTPSSSS (191 aa). Positions 174–206 are disordered; that stretch reads VPGQDDSHNEDGESGSEASDSVSNCGQPGSQNI. The segment covering 197-206 has biased composition (polar residues); that stretch reads NCGQPGSQNI. The 97-residue stretch at 234–330 folds into the BEN domain; that stretch reads EMRVRCAIIP…SKCRTAWRRK (97 aa). Residue K283 is modified to N6-acetyllysine. The disordered stretch occupies residues 335 to 368; it reads SLAVKSFSRRTPSSSSYSASETMMGTPPPTSELQ. A compositionally biased stretch (low complexity) spans 343–354; the sequence is RRTPSSSSYSAS. T345 carries the phosphothreonine modification. Phosphoserine is present on S347. A DNA-binding region spans residues 350–400; the sequence is SYSASETMMGTPPPTSELQQSQPQALHYALANAQQVQIHQIGEDGQVQVIP. T360 is subject to Phosphothreonine.

The protein belongs to the BANP/SMAR1 family. In terms of assembly, part of a corepressor complex containing BANP, HDAC1, SIN3A, SIN3B, RBL1 and RBL2. Forms a trimeric complex in the nucleus consisting of BANP, HDAC6 and KHDRBS1/SAM68; HDAC6 keeps KHDRBS1 in a deacetylated state which inhibits the inclusion of CD44 alternate exons. The complex is disrupted by MAPK1/MAPK3-mediated phosphorylation of BANP which results in BANP export to the cytoplasm. This facilitates acetylation of KHDRBS1 and CD44 variant exon inclusion. Interacts with TP53. Interacts with CUX1/CDP. Interacts with HDAC1. MAPK1/MAPK3-mediated phosphorylation at Thr-345 and Thr-360 results in export to the cytoplasm. As to expression, highly expressed in heart, spleen, and thymus. Isoform 1 is highly expressed in kidney, brain and testis. Isoform 3 is highly expressed in kidney and lung.

The protein localises to the nucleus. Its subcellular location is the nucleus speckle. It is found in the cytoplasm. Its function is as follows. Controls V(D)J recombination during T-cell development by repressing T-cell receptor (TCR) beta enhancer function. Binds to scaffold/matrix attachment region beta (S/MARbeta), an ATC-rich DNA sequence located upstream of the TCR beta enhancer. Represses cyclin D1 transcription by recruiting HDAC1 to its promoter, thereby diminishing H3K9ac, H3S10ph and H4K8ac levels. Promotes TP53 activation, which causes cell cycle arrest and inhibits tumor growth. Plays a role in the regulation of alternative splicing. Binds to CD44 pre-mRNA and negatively regulates the inclusion of CD44 proximal variable exons v2-v6 but has no effect on distal variable exons v7-v10. The chain is Protein BANP (Banp) from Mus musculus (Mouse).